The sequence spans 295 residues: Probable endonuclease lcl3 (295 aa).

Residues M1–S35 form a disordered region. The segment covering A17–A27 has biased composition (basic and acidic residues). Residues F52–I74 traverse the membrane as a helical segment. The TNase-like domain maps to R96–D263. The active site involves R147. Position 152 (D152) interacts with Ca(2+). Active-site residues include E155 and R195.

This sequence belongs to the LCL3 family.

The protein resides in the mitochondrion. It localises to the membrane. This is Probable endonuclease lcl3 (lcl3) from Neosartorya fischeri (strain ATCC 1020 / DSM 3700 / CBS 544.65 / FGSC A1164 / JCM 1740 / NRRL 181 / WB 181) (Aspergillus fischerianus).